The chain runs to 213 residues: Redox-sensing transcriptional repressor Rex (213 aa).

Residues 18–57 constitute a DNA-binding region (H-T-H motif); that stretch reads LYYRFLKNLHASGKQRVSSAELSEAVKVDPATIRRDFSYF. 92-97 contributes to the NAD(+) binding site; that stretch reads GVGNLG.

It belongs to the transcriptional regulatory Rex family. In terms of assembly, homodimer.

Its subcellular location is the cytoplasm. In terms of biological role, modulates transcription in response to changes in cellular NADH/NAD(+) redox state. The polypeptide is Redox-sensing transcriptional repressor Rex (Geobacillus kaustophilus (strain HTA426)).